Reading from the N-terminus, the 611-residue chain is Dihydroxy-acid dehydratase (611 aa).

Aspartate 81 contacts Mg(2+). Cysteine 122 provides a ligand contact to [2Fe-2S] cluster. Residues aspartate 123 and lysine 124 each contribute to the Mg(2+) site. Residue lysine 124 is modified to N6-carboxylysine. Cysteine 195 provides a ligand contact to [2Fe-2S] cluster. Residue glutamate 491 coordinates Mg(2+). The Proton acceptor role is filled by serine 517.

This sequence belongs to the IlvD/Edd family. Homodimer. [2Fe-2S] cluster is required as a cofactor. The cofactor is Mg(2+).

It catalyses the reaction (2R)-2,3-dihydroxy-3-methylbutanoate = 3-methyl-2-oxobutanoate + H2O. The enzyme catalyses (2R,3R)-2,3-dihydroxy-3-methylpentanoate = (S)-3-methyl-2-oxopentanoate + H2O. Its pathway is amino-acid biosynthesis; L-isoleucine biosynthesis; L-isoleucine from 2-oxobutanoate: step 3/4. It participates in amino-acid biosynthesis; L-valine biosynthesis; L-valine from pyruvate: step 3/4. In terms of biological role, functions in the biosynthesis of branched-chain amino acids. Catalyzes the dehydration of (2R,3R)-2,3-dihydroxy-3-methylpentanoate (2,3-dihydroxy-3-methylvalerate) into 2-oxo-3-methylpentanoate (2-oxo-3-methylvalerate) and of (2R)-2,3-dihydroxy-3-methylbutanoate (2,3-dihydroxyisovalerate) into 2-oxo-3-methylbutanoate (2-oxoisovalerate), the penultimate precursor to L-isoleucine and L-valine, respectively. The polypeptide is Dihydroxy-acid dehydratase (Actinobacillus pleuropneumoniae serotype 5b (strain L20)).